Consider the following 148-residue polypeptide: 3-dehydroquinate dehydratase (148 aa).

Y24 acts as the Proton acceptor in catalysis. Substrate contacts are provided by N75, H81, and D88. H101 functions as the Proton donor in the catalytic mechanism. Residues 102-103 and R112 contribute to the substrate site; that span reads LS.

It belongs to the type-II 3-dehydroquinase family. Homododecamer.

It catalyses the reaction 3-dehydroquinate = 3-dehydroshikimate + H2O. The protein operates within metabolic intermediate biosynthesis; chorismate biosynthesis; chorismate from D-erythrose 4-phosphate and phosphoenolpyruvate: step 3/7. In terms of biological role, catalyzes a trans-dehydration via an enolate intermediate. The polypeptide is 3-dehydroquinate dehydratase (Rhizobium meliloti (strain 1021) (Ensifer meliloti)).